The following is a 449-amino-acid chain: UDP-N-acetylmuramoylalanine--D-glutamate ligase (449 aa).

118–124 (GTNGKTT) serves as a coordination point for ATP.

This sequence belongs to the MurCDEF family.

It localises to the cytoplasm. The catalysed reaction is UDP-N-acetyl-alpha-D-muramoyl-L-alanine + D-glutamate + ATP = UDP-N-acetyl-alpha-D-muramoyl-L-alanyl-D-glutamate + ADP + phosphate + H(+). It participates in cell wall biogenesis; peptidoglycan biosynthesis. Functionally, cell wall formation. Catalyzes the addition of glutamate to the nucleotide precursor UDP-N-acetylmuramoyl-L-alanine (UMA). This Staphylococcus aureus (strain MSSA476) protein is UDP-N-acetylmuramoylalanine--D-glutamate ligase.